The sequence spans 480 residues: uncharacterized protein (480 aa).

N6-(pyridoxal phosphate)lysine is present on Lys222.

It belongs to the Orn/Lys/Arg decarboxylase class-I family. Pyridoxal 5'-phosphate is required as a cofactor.

This is an uncharacterized protein from Bacillus subtilis (strain 168).